The following is a 1939-amino-acid chain: Myosin-8 (1939 aa).

A Myosin N-terminal SH3-like domain is found at 35–84; that stretch reads DAKTSVFVAEPKASYVKSTIQSKEGGKVTVKTEGGATLTVREDQVFPMNP. Phosphothreonine is present on residues Thr-66 and Thr-71. Positions 88 to 783 constitute a Myosin motor domain; the sequence is DKIEDMAMMT…LLGLLEEMRD (696 aa). Residue Lys-132 is modified to N6,N6,N6-trimethyllysine. 181-188 is an ATP binding site; that stretch reads GESGAGKT. The residue at position 391 (Tyr-391) is a Phosphotyrosine. Thr-421 carries the post-translational modification Phosphothreonine. Position 426 is a phosphotyrosine (Tyr-426). Ser-627 is subject to Phosphoserine. Positions 660-682 are actin-binding; it reads LNKLMTNLRSTHPHFVRCIIPNE. Pros-methylhistidine is present on His-758. An actin-binding region spans residues 762–776; that stretch reads KFGHTKVFFKAGLLG. The IQ domain maps to 783–815; that stretch reads DEKLSQIITRTQAVCRGFLMRVEYQKMLQRREA. Residues 844–1939 are a coiled coil; it reads LLKSAETEKE…REVHTKISAE (1096 aa). Residues Ser-1093, Ser-1097, Ser-1163, and Ser-1238 each carry the phosphoserine modification. Residue Thr-1242 is modified to Phosphothreonine. Ser-1244 carries the phosphoserine modification. Residue Thr-1256 is modified to Phosphothreonine. Ser-1262 is subject to Phosphoserine. 2 positions are modified to phosphothreonine: Thr-1266 and Thr-1287. 3 positions are modified to phosphoserine: Ser-1293, Ser-1304, and Ser-1307. Residue Tyr-1465 is modified to Phosphotyrosine. Thr-1468 bears the Phosphothreonine mark. Ser-1475 is subject to Phosphoserine. Tyr-1493 carries the phosphotyrosine modification. Residue Ser-1496 is modified to Phosphoserine. At Thr-1502 the chain carries Phosphothreonine. Ser-1515 bears the Phosphoserine mark. The residue at position 1518 (Thr-1518) is a Phosphothreonine. Phosphoserine occurs at positions 1555, 1575, 1601, 1604, 1715, and 1727. Thr-1731 carries the post-translational modification Phosphothreonine. Ser-1740 bears the Phosphoserine mark.

Belongs to the TRAFAC class myosin-kinesin ATPase superfamily. Myosin family. Muscle myosin is a hexameric protein that consists of 2 heavy chain subunits (MHC), 2 alkali light chain subunits (MLC) and 2 regulatory light chain subunits (MLC-2).

Its subcellular location is the cytoplasm. The protein resides in the myofibril. Its function is as follows. Muscle contraction. The polypeptide is Myosin-8 (MYH8) (Canis lupus familiaris (Dog)).